A 293-amino-acid chain; its full sequence is Eukaryotic translation initiation factor 3 subunit F (293 aa).

Ala-2 bears the N-acetylalanine mark. The MPN domain maps to Ala-28–Ser-159.

Belongs to the eIF-3 subunit F family. As to quaternary structure, component of the eukaryotic translation initiation factor 3 (eIF-3) complex. Binds to TIF3E1 and TIF3H1. Expressed in inflorescences, leaves, stems, siliques, roots and seedlings. Accumulates at highly levels in pollen grains, developing embryos and root tips.

The protein localises to the cytoplasm. In terms of biological role, component of the eukaryotic translation initiation factor 3 (eIF-3) complex, which is involved in protein synthesis of a specialized repertoire of mRNAs and, together with other initiation factors, stimulates binding of mRNA and methionyl-tRNAi to the 40S ribosome. The eIF-3 complex specifically targets and initiates translation of a subset of mRNAs involved in cell proliferation (Potential). Involved in cell growth and differentiation, especially during embryogenesis and male gametophyte germination. Regulates sensitivity to sugars (e.g. sucrose). This Arabidopsis thaliana (Mouse-ear cress) protein is Eukaryotic translation initiation factor 3 subunit F (TIF3F1).